Reading from the N-terminus, the 255-residue chain is Probable transcriptional regulator ycf27 (255 aa).

Residues Lys-9 to Leu-122 form the Response regulatory domain. The residue at position 58 (Asp-58) is a 4-aspartylphosphate. Positions Asp-78–Gly-96 form a DNA-binding region, H-T-H motif. Residues Ser-137–Arg-238 constitute a DNA-binding region (ompR/PhoB-type).

The protein localises to the plastid. It is found in the chloroplast. Probable promoter-specific protein mediating the interaction between DNA and RNA polymerase. The protein is Probable transcriptional regulator ycf27 (ycf27) of Galdieria sulphuraria (Red alga).